A 415-amino-acid chain; its full sequence is BTB/POZ and MATH domain-containing protein 6 (415 aa).

The segment at 1–33 (MSKLMTRTSGSSSPNTIPDQIESPTSSRSVTQT) is disordered. In terms of domain architecture, MATH spans 35 to 169 (NGSHQFVIQG…DDCLKINCTV (135 aa)). In terms of domain architecture, BTB spans 205–271 (SDVTFDVAGE…MYKDSLPGDV (67 aa)). The interval 385–415 (SSSGGGKSQSVWAQLSNGGETSSRRVRQRTT) is disordered. A compositionally biased stretch (polar residues) spans 392 to 405 (SQSVWAQLSNGGET).

It belongs to the Tdpoz family. In terms of assembly, heterodimer with BPM1. Interacts with RAP2-4. Interacts with CUL3A. Binds to MYB56 at the promoter of FLOWERING LOCUS T (FT). In terms of tissue distribution, ubiquitous.

The protein localises to the nucleus. The protein resides in the cytoplasm. The protein operates within protein modification; protein ubiquitination. Functionally, may act as a substrate-specific adapter of an E3 ubiquitin-protein ligase complex (CUL3-RBX1-BTB) which mediates the ubiquitination and subsequent proteasomal degradation of target proteins. The polypeptide is BTB/POZ and MATH domain-containing protein 6 (BPM6) (Arabidopsis thaliana (Mouse-ear cress)).